Consider the following 951-residue polypeptide: Protein translocase subunit SecA 1 (951 aa).

ATP-binding positions include glutamine 87, 105–109, and aspartate 525; that span reads GEGKT. A disordered region spans residues 911–942; sequence PVVSADRSSRDPGNPASWGKVGRNEDCPCGSG. The Zn(2+) site is built by cysteine 937, cysteine 939, cysteine 948, and histidine 949.

This sequence belongs to the SecA family. As to quaternary structure, monomer and homodimer. Part of the essential Sec protein translocation apparatus which comprises SecA, SecYEG and auxiliary proteins SecDF-YajC and YidC. Requires Zn(2+) as cofactor.

Its subcellular location is the cell inner membrane. The protein localises to the cytoplasm. It catalyses the reaction ATP + H2O + cellular proteinSide 1 = ADP + phosphate + cellular proteinSide 2.. Functionally, part of the Sec protein translocase complex. Interacts with the SecYEG preprotein conducting channel. Has a central role in coupling the hydrolysis of ATP to the transfer of proteins into and across the cell membrane, serving both as a receptor for the preprotein-SecB complex and as an ATP-driven molecular motor driving the stepwise translocation of polypeptide chains across the membrane. The chain is Protein translocase subunit SecA 1 from Nitrobacter hamburgensis (strain DSM 10229 / NCIMB 13809 / X14).